Consider the following 174-residue polypeptide: Micrococcal nuclease (174 aa).

Residues 1-23 form the signal peptide; it reads MKSALAALRAVAAAVVLIVSVPA. Residues arginine 52, glutamate 60, and arginine 94 contribute to the active site.

This sequence belongs to the thermonuclease family.

It carries out the reaction Endonucleolytic cleavage to nucleoside 3'-phosphates and 3'-phosphooligonucleotide end-products.. This is Micrococcal nuclease (nuc) from Shigella flexneri.